The following is an 829-amino-acid chain: Periplasmic nitrate reductase (829 aa).

The segment at residues 1–29 (MKMTRRAFVKANAAASAAAVAGVTLPASA) is a signal peptide (tat-type signal). The 4Fe-4S Mo/W bis-MGD-type domain maps to 41–97 (IKWDKAPCRFCGTGCSVLVGTQNGRVVATQGDPEAPVNKGLNCIKGYFLSKIMYGKD). Residues Cys-48, Cys-51, Cys-55, and Cys-83 each contribute to the [4Fe-4S] cluster site. Residues Lys-85, Gln-152, Asn-177, Cys-181, 214–221 (WGSNMAEM), 245–249 (STYYH), 264–266 (QSD), Met-374, Gln-378, Asn-484, 510–511 (SD), Lys-533, Asp-560, and 718–727 (TGRVLEHWHT) each bind Mo-bis(molybdopterin guanine dinucleotide). Phe-794 provides a ligand contact to substrate. Mo-bis(molybdopterin guanine dinucleotide)-binding residues include Asn-802 and Lys-819.

Belongs to the prokaryotic molybdopterin-containing oxidoreductase family. NasA/NapA/NarB subfamily. As to quaternary structure, component of the periplasmic nitrate reductase NapAB complex composed of NapA and NapB. [4Fe-4S] cluster serves as cofactor. Mo-bis(molybdopterin guanine dinucleotide) is required as a cofactor. Post-translationally, predicted to be exported by the Tat system. The position of the signal peptide cleavage has not been experimentally proven.

It is found in the periplasm. The enzyme catalyses 2 Fe(II)-[cytochrome] + nitrate + 2 H(+) = 2 Fe(III)-[cytochrome] + nitrite + H2O. Catalytic subunit of the periplasmic nitrate reductase complex NapAB. Receives electrons from NapB and catalyzes the reduction of nitrate to nitrite. The protein is Periplasmic nitrate reductase of Aliivibrio fischeri (strain MJ11) (Vibrio fischeri).